Reading from the N-terminus, the 205-residue chain is Octanoyltransferase (205 aa).

Residues Asn30–Phe205 enclose the BPL/LPL catalytic domain. Substrate-binding positions include Arg68–His75, Ala140–Gly142, and Gly153–Ala155. The Acyl-thioester intermediate role is filled by Cys171.

Belongs to the LipB family.

It localises to the cytoplasm. It catalyses the reaction octanoyl-[ACP] + L-lysyl-[protein] = N(6)-octanoyl-L-lysyl-[protein] + holo-[ACP] + H(+). Its pathway is protein modification; protein lipoylation via endogenous pathway; protein N(6)-(lipoyl)lysine from octanoyl-[acyl-carrier-protein]: step 1/2. Its function is as follows. Catalyzes the transfer of endogenously produced octanoic acid from octanoyl-acyl-carrier-protein onto the lipoyl domains of lipoate-dependent enzymes. Lipoyl-ACP can also act as a substrate although octanoyl-ACP is likely to be the physiological substrate. This chain is Octanoyltransferase, found in Wolbachia pipientis wMel.